The chain runs to 244 residues: Adenosylcobinamide-GDP ribazoletransferase (244 aa).

The next 5 helical transmembrane spans lie at 31-51, 55-75, 109-129, 133-153, and 188-208; these read LLCY…ASHL, APAP…SGAL, IAVV…WVLV, AGAL…GLFL, and LLLG…VFLW.

Belongs to the CobS family. Mg(2+) serves as cofactor.

It is found in the cell inner membrane. It carries out the reaction alpha-ribazole + adenosylcob(III)inamide-GDP = adenosylcob(III)alamin + GMP + H(+). It catalyses the reaction alpha-ribazole 5'-phosphate + adenosylcob(III)inamide-GDP = adenosylcob(III)alamin 5'-phosphate + GMP + H(+). Its pathway is cofactor biosynthesis; adenosylcobalamin biosynthesis; adenosylcobalamin from cob(II)yrinate a,c-diamide: step 7/7. Functionally, joins adenosylcobinamide-GDP and alpha-ribazole to generate adenosylcobalamin (Ado-cobalamin). Also synthesizes adenosylcobalamin 5'-phosphate from adenosylcobinamide-GDP and alpha-ribazole 5'-phosphate. This Pseudomonas putida (strain W619) protein is Adenosylcobinamide-GDP ribazoletransferase.